The chain runs to 344 residues: uncharacterized protein (344 aa).

Helical transmembrane passes span 53–73 (FVVG…VSVW), 84–104 (WPIL…GYNI), 153–173 (IYPL…LYLL), 189–209 (FGAW…LEML), and 275–295 (IASE…VGVF).

The protein belongs to the steroid 5-alpha reductase family.

Its subcellular location is the endoplasmic reticulum membrane. This is an uncharacterized protein from Schizosaccharomyces pombe (strain 972 / ATCC 24843) (Fission yeast).